A 249-amino-acid chain; its full sequence is Proteasome subunit alpha type-7 (249 aa).

This sequence belongs to the peptidase T1A family. As to quaternary structure, the 26S proteasome consists of a 20S proteasome core and two 19S regulatory subunits. The 20S proteasome core is a barrel-shaped complex made of 28 subunits that are arranged in four stacked rings. The two outer rings are each formed by seven alpha subunits, and the two inner rings are formed by seven beta subunits. The proteolytic activity is exerted by three beta-subunits PSMB5, PSMB6 and PSMB7. PSMA7 interacts directly with the PSMG1-PSMG2 heterodimer which promotes 20S proteasome assembly. Interacts with HIF1A. Interacts with RAB7A. Interacts with PRKN. Interacts with ABL1 and ABL2. Interacts with EMAP2. Interacts with MAVS.

Its subcellular location is the cytoplasm. It localises to the nucleus. Component of the 20S core proteasome complex involved in the proteolytic degradation of most intracellular proteins. This complex plays numerous essential roles within the cell by associating with different regulatory particles. Associated with two 19S regulatory particles, forms the 26S proteasome and thus participates in the ATP-dependent degradation of ubiquitinated proteins. The 26S proteasome plays a key role in the maintenance of protein homeostasis by removing misfolded or damaged proteins that could impair cellular functions, and by removing proteins whose functions are no longer required. Associated with the PA200 or PA28, the 20S proteasome mediates ubiquitin-independent protein degradation. This type of proteolysis is required in several pathways including spermatogenesis (20S-PA200 complex) or generation of a subset of MHC class I-presented antigenic peptides (20S-PA28 complex). Inhibits the transactivation function of HIF-1A under both normoxic and hypoxia-mimicking conditions. The interaction with EMAP2 increases the proteasome-mediated HIF-1A degradation under the hypoxic conditions. Plays a role in hepatitis C virus internal ribosome entry site-mediated translation. Mediates nuclear translocation of the androgen receptor (AR) and thereby enhances androgen-mediated transactivation. Promotes MAVS degradation and thereby negatively regulates MAVS-mediated innate immune response. This is Proteasome subunit alpha type-7 (PSMA7) from Gallus gallus (Chicken).